The sequence spans 695 residues: ATP-dependent zinc metalloprotease FTSH 2, chloroplastic (695 aa).

The transit peptide at 1–47 directs the protein to the chloroplast; that stretch reads MAASSACLVGNGLSVNTTTKQRLSKHFSGRQTSFSSVIRTSKVNVVK. The transit peptide at 48 to 82 directs the protein to the thylakoid; the sequence is ASLDGKKKQEGRRDFLKILLGNAGVGLVASGKANA. The Lumenal, thylakoid segment spans residues 83-167; the sequence is DEQGVSSSRM…AHNAQEDQGS (85 aa). Residues 168-188 traverse the membrane as a helical segment; that stretch reads VLFNLIGNLAFPALLIGGLFL. The Stromal segment spans residues 189–695; the sequence is LSRRSGGGMG…PASAPTPAAV (507 aa). 267 to 274 contacts ATP; that stretch reads GPPGTGKT. A Zn(2+)-binding site is contributed by His-488. Residue Glu-489 is part of the active site. Positions 492 and 566 each coordinate Zn(2+). Residues 673-695 are disordered; it reads PPENRVPSSTTTTPASAPTPAAV. A compositionally biased stretch (low complexity) spans 679–695; sequence PSSTTTTPASAPTPAAV.

It in the N-terminal section; belongs to the AAA ATPase family. This sequence in the C-terminal section; belongs to the peptidase M41 family. Interacts with CHIP and FTSH5. Heterohexamers with FTSH1, FTSH5 and FTSH8. May also form homooligomers. Zn(2+) is required as a cofactor. The FTSH2 precursor is ubiquitinated by CHIP in the cytoplasm. Expressed in cotyledons, cauline and rosette leaves, stems, sepals, flovers and siliques. Very low in roots.

It localises to the plastid. It is found in the chloroplast thylakoid membrane. Part of a complex that function as an ATP-dependent zinc metallopeptidase. Involved in the thylakoid formation and in the removal of damaged D1 in the photosystem II, preventing cell death under high-intensity light conditions, but not involved in thermotolerance. In Arabidopsis thaliana (Mouse-ear cress), this protein is ATP-dependent zinc metalloprotease FTSH 2, chloroplastic (FTSH2).